The primary structure comprises 246 residues: Carboxylesterase (246 aa).

Serine 93 acts as the Nucleophile in catalysis. Catalysis depends on charge relay system residues aspartate 192 and histidine 222.

This sequence belongs to the lipase/esterase LIP3/BchO family. Homodimer.

The enzyme catalyses a carboxylic ester + H2O = an alcohol + a carboxylate + H(+). Involved in the detoxification of xenobiotics. Shows maximal activity with C6 substrates, with gradually decreasing activity from C8 to C12 substrates. No activity for higher chain length substrates acids rather than long-chain ones. The sequence is that of Carboxylesterase (est) from Geobacillus stearothermophilus (Bacillus stearothermophilus).